The primary structure comprises 225 residues: Holliday junction branch migration complex subunit RuvA (225 aa).

The tract at residues 1–68 (MIGWLQGQKV…DDGSSLFGFP (68 aa)) is domain I. The interval 69-147 (ERRERDMFRT…EFSCRDPGMS (79 aa)) is domain II. The flexible linker stretch occupies residues 148–158 (LVDNGVIDSHQ). Residues 159-225 (LKDSSLHELQ…SLRWLSQEAA (67 aa)) form a domain III region.

The protein belongs to the RuvA family. In terms of assembly, homotetramer. Forms an RuvA(8)-RuvB(12)-Holliday junction (HJ) complex. HJ DNA is sandwiched between 2 RuvA tetramers; dsDNA enters through RuvA and exits via RuvB. An RuvB hexamer assembles on each DNA strand where it exits the tetramer. Each RuvB hexamer is contacted by two RuvA subunits (via domain III) on 2 adjacent RuvB subunits; this complex drives branch migration. In the full resolvosome a probable DNA-RuvA(4)-RuvB(12)-RuvC(2) complex forms which resolves the HJ.

It localises to the cytoplasm. Functionally, the RuvA-RuvB-RuvC complex processes Holliday junction (HJ) DNA during genetic recombination and DNA repair, while the RuvA-RuvB complex plays an important role in the rescue of blocked DNA replication forks via replication fork reversal (RFR). RuvA specifically binds to HJ cruciform DNA, conferring on it an open structure. The RuvB hexamer acts as an ATP-dependent pump, pulling dsDNA into and through the RuvAB complex. HJ branch migration allows RuvC to scan DNA until it finds its consensus sequence, where it cleaves and resolves the cruciform DNA. This is Holliday junction branch migration complex subunit RuvA from Prochlorococcus marinus (strain MIT 9313).